The chain runs to 263 residues: Tryptophan synthase alpha chain (263 aa).

Active-site proton acceptor residues include Glu-49 and Asp-60.

It belongs to the TrpA family. In terms of assembly, tetramer of two alpha and two beta chains.

It carries out the reaction (1S,2R)-1-C-(indol-3-yl)glycerol 3-phosphate + L-serine = D-glyceraldehyde 3-phosphate + L-tryptophan + H2O. The protein operates within amino-acid biosynthesis; L-tryptophan biosynthesis; L-tryptophan from chorismate: step 5/5. In terms of biological role, the alpha subunit is responsible for the aldol cleavage of indoleglycerol phosphate to indole and glyceraldehyde 3-phosphate. The protein is Tryptophan synthase alpha chain of Cereibacter sphaeroides (strain ATCC 17025 / ATH 2.4.3) (Rhodobacter sphaeroides).